We begin with the raw amino-acid sequence, 457 residues long: Putative adhesion G protein-coupled receptor E4P (457 aa).

An N-terminal signal peptide occupies residues 1 to 14; sequence MGSRFLLVLLSGAS. Cystine bridges form between Cys-15–Cys-24, Cys-18–Cys-30, Cys-32–Cys-52, Cys-58–Cys-71, Cys-65–Cys-80, and Cys-82–Cys-103. Residues 15–53 form the EGF-like 1 domain; it reads CPPCPKYASCHNSTHCTCEDGFRARSGRTYFHDSSEKCE. The Extracellular portion of the chain corresponds to 16–191; it reads PPCPKYASCH…LAPKEDPVLT (176 aa). N-linked (GlcNAc...) asparagine glycosylation is present at Asn-26. An EGF-like 2; calcium-binding domain is found at 54–104; that stretch reads DINECETGLAKCKYKAYCRNKVGGYICSCLVKYTLFNFLAGIIDYDHPDCY. Asn-106 and Asn-162 each carry an N-linked (GlcNAc...) asparagine glycan. Residues 134 to 186 enclose the GAIN-B domain; it reads DKRTKHICVYWEGSEGGWSTEGCSHVHSNGSYTKCKCFHLSSFAVLVALAPKE. 2 cysteine pairs are disulfide-bonded: Cys-141–Cys-168 and Cys-156–Cys-170. A GPS region spans residues 141–186; it reads CVYWEGSEGGWSTEGCSHVHSNGSYTKCKCFHLSSFAVLVALAPKE. Residues 192–212 form a helical membrane-spanning segment; that stretch reads VITQVGLTISLLCLFLAILTF. Residues 213–223 are Cytoplasmic-facing; it reads LLCRPIQNTST. Residues 224-244 traverse the membrane as a helical segment; it reads SLHLELSLCLFLAHLLFLTGI. Asn-245 carries an N-linked (GlcNAc...) asparagine glycan. Topologically, residues 245-250 are extracellular; it reads NRTEPE. A helical transmembrane segment spans residues 251 to 271; it reads VLCSIIAGLLHFLYLACFTWM. Topologically, residues 272–299 are cytoplasmic; that stretch reads LLEGLHLFLTVRNLKVANYTSTGRFKKR. Residues 300-320 traverse the membrane as a helical segment; sequence FMYPVGYGIPAVIIAVSAIVG. Residues 321-336 are Extracellular-facing; sequence PQNYGTFTCWLKLDKG. A helical membrane pass occupies residues 337–357; sequence FIWSFMGPVAVIILINLVFYF. Over 358 to 384 the chain is Cytoplasmic; that stretch reads QVLWILRSKLSSLNKEVSTIQDTRVMT. The chain crosses the membrane as a helical span at residues 385–405; it reads FKAISQLFILGCSWGLGFFMV. The Extracellular segment spans residues 406-413; that stretch reads EEVGKTIG. Residues 414–434 traverse the membrane as a helical segment; the sequence is SIIAYSFTIINTLQGVLLFVV. Topologically, residues 435 to 457 are cytoplasmic; sequence HCLLNRQVRLIILSVISLVPKSN.

This sequence belongs to the G-protein coupled receptor 2 family. Adhesion G-protein coupled receptor (ADGR) subfamily. Forms a heterodimer, consisting of a large extracellular region (alpha subunit) non-covalently linked to a seven-transmembrane moiety (beta subunit). In terms of processing, glycosylated. Post-translationally, proteolytically cleaved into 2 subunits, an extracellular alpha subunit and a seven-transmembrane subunit.

The protein resides in the cell membrane. Its subcellular location is the secreted. May mediate the cellular interaction between myeloid cells and B-cells. In Homo sapiens (Human), this protein is Putative adhesion G protein-coupled receptor E4P.